Reading from the N-terminus, the 63-residue chain is Conotoxin Cal12.5 (63 aa).

The signal sequence occupies residues 1 to 21 (MKVTCVLVVLLLLLPYGDLLG).

Belongs to the conotoxin O1 superfamily. Contains 4 disulfide bonds. In terms of tissue distribution, expressed by the venom duct.

Its subcellular location is the secreted. Functionally, probable neurotoxin. The chain is Conotoxin Cal12.5 from Californiconus californicus (California cone).